The chain runs to 138 residues: Putative pre-16S rRNA nuclease (138 aa).

Belongs to the YqgF nuclease family.

It localises to the cytoplasm. Could be a nuclease involved in processing of the 5'-end of pre-16S rRNA. In Salmonella typhimurium (strain LT2 / SGSC1412 / ATCC 700720), this protein is Putative pre-16S rRNA nuclease.